We begin with the raw amino-acid sequence, 431 residues long: Histidinol dehydrogenase (431 aa).

Positions 127, 189, and 212 each coordinate NAD(+). Residues Ser-237, Gln-259, and His-262 each contribute to the substrate site. The Zn(2+) site is built by Gln-259 and His-262. Residues Glu-326 and His-327 each act as proton acceptor in the active site. Substrate-binding residues include His-327, Asp-360, Glu-414, and His-419. Asp-360 serves as a coordination point for Zn(2+). His-419 contributes to the Zn(2+) binding site.

Belongs to the histidinol dehydrogenase family. Zn(2+) serves as cofactor.

It catalyses the reaction L-histidinol + 2 NAD(+) + H2O = L-histidine + 2 NADH + 3 H(+). Its pathway is amino-acid biosynthesis; L-histidine biosynthesis; L-histidine from 5-phospho-alpha-D-ribose 1-diphosphate: step 9/9. Its function is as follows. Catalyzes the sequential NAD-dependent oxidations of L-histidinol to L-histidinaldehyde and then to L-histidine. The polypeptide is Histidinol dehydrogenase (Xanthomonas oryzae pv. oryzae (strain KACC10331 / KXO85)).